Consider the following 288-residue polypeptide: Bifunctional protein FolD (288 aa).

Residues 166 to 168 (GAS) and I232 contribute to the NADP(+) site.

The protein belongs to the tetrahydrofolate dehydrogenase/cyclohydrolase family. Homodimer.

It carries out the reaction (6R)-5,10-methylene-5,6,7,8-tetrahydrofolate + NADP(+) = (6R)-5,10-methenyltetrahydrofolate + NADPH. The catalysed reaction is (6R)-5,10-methenyltetrahydrofolate + H2O = (6R)-10-formyltetrahydrofolate + H(+). Its pathway is one-carbon metabolism; tetrahydrofolate interconversion. Its function is as follows. Catalyzes the oxidation of 5,10-methylenetetrahydrofolate to 5,10-methenyltetrahydrofolate and then the hydrolysis of 5,10-methenyltetrahydrofolate to 10-formyltetrahydrofolate. This Escherichia coli O8 (strain IAI1) protein is Bifunctional protein FolD.